Consider the following 471-residue polypeptide: Tryptophanase (471 aa).

Lys5, Lys115, and Lys156 each carry N6-acetyllysine. N6-(pyridoxal phosphate)lysine is present on Lys270. The residue at position 450 (Lys450) is an N6-acetyllysine.

The protein belongs to the beta-eliminating lyase family. Homotetramer. Pyridoxal 5'-phosphate serves as cofactor.

The enzyme catalyses L-tryptophan + H2O = indole + pyruvate + NH4(+). The protein operates within amino-acid degradation; L-tryptophan degradation via pyruvate pathway; indole and pyruvate from L-tryptophan: step 1/1. The sequence is that of Tryptophanase from Escherichia fergusonii (strain ATCC 35469 / DSM 13698 / CCUG 18766 / IAM 14443 / JCM 21226 / LMG 7866 / NBRC 102419 / NCTC 12128 / CDC 0568-73).